Reading from the N-terminus, the 74-residue chain is MARRRRRNKVCSFCAEKTTTVSYKDLDRLKKYITERGKILPRRINGNCAKHQRQLTTAIKKARQLALLPYTVEN.

The protein belongs to the bacterial ribosomal protein bS18 family. In terms of assembly, part of the 30S ribosomal subunit. Forms a tight heterodimer with protein bS6.

Its function is as follows. Binds as a heterodimer with protein bS6 to the central domain of the 16S rRNA, where it helps stabilize the platform of the 30S subunit. This is Small ribosomal subunit protein bS18 from Natranaerobius thermophilus (strain ATCC BAA-1301 / DSM 18059 / JW/NM-WN-LF).